The following is a 487-amino-acid chain: Iron-sulfur cluster assembly SufBD family protein ycf24 (487 aa).

The protein belongs to the iron-sulfur cluster assembly SufBD family.

The protein localises to the plastid. The protein resides in the chloroplast. This chain is Iron-sulfur cluster assembly SufBD family protein ycf24 (ycf24), found in Porphyra purpurea (Red seaweed).